Consider the following 92-residue polypeptide: MNKNYSYPLDLSWSTEELASVLSFLNDVEKAYESKVSAQQLLGSYAVFKEVVPSKAEEKRIGREFESVSGYSLYRAVQAAKNTEKGMISLGK.

The protein belongs to the UPF0223 family.

The polypeptide is UPF0223 protein SGO_1052 (Streptococcus gordonii (strain Challis / ATCC 35105 / BCRC 15272 / CH1 / DL1 / V288)).